Consider the following 203-residue polypeptide: Dephospho-CoA kinase (203 aa).

Residues 6–203 form the DPCK domain; sequence RLGITGGIAC…SLLGRGGKGG (198 aa). 14 to 19 lines the ATP pocket; that stretch reads ACGKSV.

The protein belongs to the CoaE family.

The protein resides in the cytoplasm. The enzyme catalyses 3'-dephospho-CoA + ATP = ADP + CoA + H(+). It participates in cofactor biosynthesis; coenzyme A biosynthesis; CoA from (R)-pantothenate: step 5/5. Catalyzes the phosphorylation of the 3'-hydroxyl group of dephosphocoenzyme A to form coenzyme A. The chain is Dephospho-CoA kinase from Thermosynechococcus vestitus (strain NIES-2133 / IAM M-273 / BP-1).